Consider the following 181-residue polypeptide: Probable RNA 2'-phosphotransferase (181 aa).

Belongs to the KptA/TPT1 family.

Its function is as follows. Removes the 2'-phosphate from RNA via an intermediate in which the phosphate is ADP-ribosylated by NAD followed by a presumed transesterification to release the RNA and generate ADP-ribose 1''-2''-cyclic phosphate (APPR&gt;P). May function as an ADP-ribosylase. This is Probable RNA 2'-phosphotransferase from Nostoc punctiforme (strain ATCC 29133 / PCC 73102).